The following is a 249-amino-acid chain: dTDP-4-amino-2,3,4,6-tetradeoxy-D-glucose N,N-dimethyltransferase (249 aa).

Residue arginine 30 participates in substrate binding. Residues alanine 59, glutamate 80, and 102 to 103 (DI) contribute to the S-adenosyl-L-methionine site. Substrate-binding positions include threonine 165, 178 to 182 (RLSHS), and arginine 241.

It belongs to the methyltransferase TylM1/DesVI family. As to quaternary structure, homodimer. Mg(2+) serves as cofactor.

It catalyses the reaction dTDP-4-amino-2,3,4,6-tetradeoxy-alpha-D-erythro-hexopyranose + 2 S-adenosyl-L-methionine = dTDP-alpha-D-forosamine + 2 S-adenosyl-L-homocysteine + 2 H(+). Its function is as follows. Involved in the biosynthesis of forosamine ((4-dimethylamino)-2,3,4,6-tetradeoxy-alpha-D-threo-hexopyranose), a highly deoxygenated sugar component of several bioactive natural products such as the insecticidal spinosyns A and D. Catalyzes the dimethylation of the C-4 amino group from dTDP-4-amino-2,3,4,6-tetradeoxy-alpha-D-glucose to yield dTDP-D-forosamine. This chain is dTDP-4-amino-2,3,4,6-tetradeoxy-D-glucose N,N-dimethyltransferase, found in Saccharopolyspora spinosa.